A 1277-amino-acid polypeptide reads, in one-letter code: Membrane-associated guanylate kinase, WW and PDZ domain-containing protein 2 (1277 aa).

Residues 17-101 enclose the PDZ domain; the sequence is ESVIGRNPEG…PLRLKCVKQG (85 aa). In terms of domain architecture, Guanylate kinase-like spans 109-283; that stretch reads RHYLNLRFQK…APVYSQPEEL (175 aa). Residues 205-308 are disordered; it reads PGATPSAEGK…EDSDPLPDNW (104 aa). A compositionally biased stretch (basic and acidic residues) spans 281 to 296; it reads EELKDQMDDTKSTKPE. 2 WW domains span residues 302 to 335 and 348 to 381; these read DPLP…DPRL and NELP…NPVL. Residues 302-381 form an interaction with DDN region; it reads DPLPDNWEMA…RRTQFENPVL (80 aa). The residue at position 362 (tyrosine 362) is a Phosphotyrosine. Positions 426–510 constitute a PDZ 1 domain; it reads STTLKKSNMG…SVNLVLCRGY (85 aa). The segment at 556–575 is disordered; that stretch reads QSVPDITDRPPHSLHSMPAD. The 79-residue stretch at 605–683 folds into the PDZ 2 domain; the sequence is TLTIVKGAKG…ETSLIIHRGG (79 aa). A Phosphoserine modification is found at serine 686. Residues 778–860 form the PDZ 3 domain; the sequence is DVHLRRMESG…NGQVNLTVRR (83 aa). Tyrosine 827 bears the Phosphotyrosine mark. The disordered stretch occupies residues 869–913; it reads CPENGRSPGSVSTHHSSPRSDYATYANSNHAAPSNNASPPEGFAS. 2 positions are modified to phosphoserine: serine 884 and serine 885. The span at 894-908 shows a compositional bias: low complexity; that stretch reads ANSNHAAPSNNASPP. A PDZ 4 domain is found at 920-1010; sequence DVIIHRKENE…SVTLRIIPQE (91 aa). A compositionally biased stretch (polar residues) spans 1011-1042; sequence ELNNPTSAPSSEKQSPMAQQHSPLAQQHSPLA. A disordered region spans residues 1011-1130; it reads ELNNPTSAPS…PDTRQYPLSD (120 aa). A compositionally biased stretch (basic and acidic residues) spans 1069–1085; the sequence is NSYRSEVKARQDVKPDI. The PDZ 5 domain occupies 1141–1223; the sequence is TVDMEKGAKG…RVRLLLKRGT (83 aa).

It belongs to the MAGUK family. As to quaternary structure, interacts (via its WW domains) with DRPLA. Interacts with CTNNB1, ACVR2A, SMAD2 and SMAD3. Part of a complex consisting of MAGI2/ARIP1, ACVR2A, ACVR1B and SMAD3. May interact with HTR2A and IGSF9. Interacts with HTR4. Interacts (via guanylate kinase domain) with DLGAP1. Interacts (via PDZ domains) with GRIN2A, GRID2 and NLGN1. Interacts with CTNND2. Interacts with MAGUIN-1. Interacts (via its second PDZ domain) with PTEN (via unphosphorylated C-terminus); this interaction diminishes the degradation rate of PTEN. Found in a complex, at least composed of KIDINS220, MAGI2, NTRK1 and RAPGEF2; the complex is mainly formed at late endosomes in a NGF-dependent manner. Interacts with RAPGEF2; the interaction occurs before or after nerve growth factor (NGF) stimulation. Isoform 1 interacts (via PDZ domain) with KIDINS220 isoform 2 (via C-terminal domain). Interacts with DDN. Identified in a complex with ACTN4, CASK, IQGAP1, NPHS1, SPTAN1 and SPTBN1. Interacts with DLL1. Found in a complex with IGSF9B and NLGN2; the interaction with IGSF9B is mediated via the PDZ 5 and PDZ 6 domains, while the interaction with NLGN2 is mediated via the WW1, WW2 and PDZ2 domains. Interacts (via PDZ 6 domain) with USH1G (via SAM domain); the interaction is triggered by phosphorylation of USH1G by CK2 and negatively regulates MAGI2-mediated endocytosis. Expressed in the foot process layer of podocytes of the kidney glomeruli but not in tubules (at protein level). Expressed in the brain.

The protein localises to the cytoplasm. It is found in the late endosome. Its subcellular location is the synapse. It localises to the synaptosome. The protein resides in the cell membrane. The protein localises to the cytoskeleton. It is found in the microtubule organizing center. Its subcellular location is the centrosome. It localises to the cell projection. The protein resides in the cilium. The protein localises to the centriole. It is found in the photoreceptor inner segment. Its subcellular location is the photoreceptor outer segment. Seems to act as scaffold molecule at synaptic junctions by assembling neurotransmitter receptors and cell adhesion proteins. Plays a role in nerve growth factor (NGF)-induced recruitment of RAPGEF2 to late endosomes and neurite outgrowth. May play a role in regulating activin-mediated signaling in neuronal cells. Enhances the ability of PTEN to suppress AKT1 activation. Plays a role in receptor-mediated clathrin-dependent endocytosis which is required for ciliogenesis. In Rattus norvegicus (Rat), this protein is Membrane-associated guanylate kinase, WW and PDZ domain-containing protein 2 (Magi2).